Here is a 460-residue protein sequence, read N- to C-terminus: ERAD-associated E3 ubiquitin-protein ligase HRD1B (460 aa).

Over 1-3 the chain is Cytoplasmic; it reads MIQ. A helical membrane pass occupies residues 4–24; it reads LKVYAGLSTLATLVVIYHAFS. Topologically, residues 25 to 40 are lumenal; that stretch reads SRGQFYPATVYLSTSK. Residues 41 to 61 traverse the membrane as a helical segment; that stretch reads INLVVLLNMGLVLMLSLWNLV. Residues 62–98 are Cytoplasmic-facing; the sequence is KIVFLGSLREAEVERLNEQAWRELMEILFAITIFRQD. The helical transmembrane segment at 99–119 threads the bilayer; sequence FSVGFISLVVTLLLIKGLHWM. The Lumenal portion of the chain corresponds to 120-140; the sequence is AQKRVEYIETTPSVTLLSHVR. Residues 141 to 161 form a helical membrane-spanning segment; the sequence is IVSFMVFLLILDCLLTYSSIQ. The Cytoplasmic segment spans residues 162-170; sequence QLIQSRKAS. The helical transmembrane segment at 171–191 threads the bilayer; the sequence is MSVFFTFEYMILATTTVSIIV. The Lumenal portion of the chain corresponds to 192-225; it reads KYAFYVTDMLKEGQWEGKPVYTFYLELVRDLLHL. A helical transmembrane segment spans residues 226–246; the sequence is SMYLCFFLMIFMNYGLPLHLI. Over 247–460 the chain is Cytoplasmic; that stretch reads RELYETFRNF…TKGKSVADTA (214 aa). The segment at 292 to 330 adopts an RING-type; atypical zinc-finger fold; that stretch reads CIICREEMTSAKKLVCGHLFHVHCLRSWLERQNTCPTCR. A disordered region spans residues 339–378; the sequence is ATSTASGNRGPHQESLQQGTGTSSSDGQGSSVSAAASENM. The span at 353-375 shows a compositional bias: low complexity; the sequence is SLQQGTGTSSSDGQGSSVSAAAS.

This sequence belongs to the HRD1 family.

The protein resides in the endoplasmic reticulum membrane. It catalyses the reaction S-ubiquitinyl-[E2 ubiquitin-conjugating enzyme]-L-cysteine + [acceptor protein]-L-lysine = [E2 ubiquitin-conjugating enzyme]-L-cysteine + N(6)-ubiquitinyl-[acceptor protein]-L-lysine.. The protein operates within protein modification; protein ubiquitination. Probable component of the HRD1 ubiquitin ligase complex that mediates the rapid degradation of misfolded endoplasmic reticulum (ER) proteins, a process called ER-associated degradation (ERAD). Targets the misfolded LRR receptor kinase BRI1. Functions redundantly with HRD3A. The protein is ERAD-associated E3 ubiquitin-protein ligase HRD1B of Arabidopsis thaliana (Mouse-ear cress).